Reading from the N-terminus, the 288-residue chain is MSSSMWYIMQSIQSKYSLSERLIRTIAAIRSFPHDNVEDLIRGGADVNCTHGTLKPLHCACMVSDADCVELLLEKGAEVNALDGYNRTVLHYAAEKDEACVEVLLEYGANPNALDGNRDTPLHWAAFKNNAECVRALLESGASVNALDYNNDTPLSWAAMKGNLESVSILLDYGAEVRVINLIGQTPISRLVALLVRGLGTEKEDSCFELLHRAVGHFELRKNGTMPREVARDPQLCEKLTVLCSAPGTLKTLARYAVRRSLGLQYLPDAVKGLPLPASLKEYLLLLE.

Position 17 is a phosphoserine (S17). ANK repeat units follow at residues 52 to 81, 85 to 113, 117 to 146, and 150 to 179; these read GTLK…EVNA, YNRT…NPNA, NRDT…SVNA, and NNDT…EVRV. The SOCS box domain occupies 235–288; that stretch reads QLCEKLTVLCSAPGTLKTLARYAVRRSLGLQYLPDAVKGLPLPASLKEYLLLLE.

It belongs to the ankyrin SOCS box (ASB) family. In terms of assembly, interacts with TBK1; this interaction promotes TBK1 proteasomal degradation. Phosphorylated by TBK1.

The protein localises to the cytoplasm. The protein operates within protein modification; protein ubiquitination. May be a substrate-recognition component of a SCF-like ECS (Elongin-Cullin-SOCS-box protein) E3 ubiquitin-protein ligase complex which mediates the ubiquitination and subsequent proteasomal degradation of target proteins. Inhibits IFN-beta production through the IRF3 signaling pathway by targeting TBK1 via 'Lys-48'-linked ubiquitination, leading to its proteasomal degradation. In Macaca fascicularis (Crab-eating macaque), this protein is Ankyrin repeat and SOCS box protein 8 (ASB8).